The primary structure comprises 146 residues: Lysozyme C (146 aa).

An N-terminal signal peptide occupies residues 1–16; sequence SGKYISWEDSCSYLQL. In terms of domain architecture, C-type lysozyme spans 17–146; that stretch reads QKYERCELAK…LSQWTQGCKL (130 aa). 4 disulfide bridges follow: cysteine 22-cysteine 144, cysteine 46-cysteine 132, cysteine 81-cysteine 97, and cysteine 93-cysteine 111. Active-site residues include glutamate 51 and aspartate 69.

It belongs to the glycosyl hydrolase 22 family. Expressed by the skin glands.

It is found in the secreted. The enzyme catalyses Hydrolysis of (1-&gt;4)-beta-linkages between N-acetylmuramic acid and N-acetyl-D-glucosamine residues in a peptidoglycan and between N-acetyl-D-glucosamine residues in chitodextrins.. In terms of biological role, lysozymes have primarily a bacteriolytic function; those in tissues and body fluids are associated with the monocyte-macrophage system and enhance the activity of immunoagents. Has antibacterial activity against the Gram-positive bacterium S.aureus and against the Gram-negative bacterium E.coli with a MIC of 1 uM and 8 uM respectively. No antifungal activity against C.albicans. The polypeptide is Lysozyme C (Bufo gargarizans andrewsi (Andrew's toad)).